The primary structure comprises 529 residues: Methionine--tRNA ligase (529 aa).

The short motif at 12–22 (YYVNALPHIGS) is the 'HIGH' region element. Residues Cys127, Cys130, Cys145, and His148 each contribute to the Zn(2+) site. A 'KMSKS' region motif is present at residues 301 to 305 (KMGKS). Lys304 is an ATP binding site.

This sequence belongs to the class-I aminoacyl-tRNA synthetase family. MetG type 2A subfamily. Monomer. Zn(2+) is required as a cofactor.

The protein localises to the cytoplasm. The enzyme catalyses tRNA(Met) + L-methionine + ATP = L-methionyl-tRNA(Met) + AMP + diphosphate. In terms of biological role, is required not only for elongation of protein synthesis but also for the initiation of all mRNA translation through initiator tRNA(fMet) aminoacylation. The polypeptide is Methionine--tRNA ligase (Thermosynechococcus vestitus (strain NIES-2133 / IAM M-273 / BP-1)).